The sequence spans 334 residues: Phosphoribosylformylglycinamidine cyclo-ligase (334 aa).

It belongs to the AIR synthase family.

The protein localises to the cytoplasm. The enzyme catalyses 2-formamido-N(1)-(5-O-phospho-beta-D-ribosyl)acetamidine + ATP = 5-amino-1-(5-phospho-beta-D-ribosyl)imidazole + ADP + phosphate + H(+). It participates in purine metabolism; IMP biosynthesis via de novo pathway; 5-amino-1-(5-phospho-D-ribosyl)imidazole from N(2)-formyl-N(1)-(5-phospho-D-ribosyl)glycinamide: step 2/2. The polypeptide is Phosphoribosylformylglycinamidine cyclo-ligase (Pyrococcus horikoshii (strain ATCC 700860 / DSM 12428 / JCM 9974 / NBRC 100139 / OT-3)).